A 392-amino-acid chain; its full sequence is 4-hydroxy-3-methylbut-2-en-1-yl diphosphate synthase (flavodoxin) (392 aa).

C280, C283, C315, and E322 together coordinate [4Fe-4S] cluster. A compositionally biased stretch (basic and acidic residues) spans 371-380; the sequence is TEKGSDHCSE. The interval 371–392 is disordered; sequence TEKGSDHCSETTRSGSPVVTVN. Over residues 381-392 the composition is skewed to polar residues; the sequence is TTRSGSPVVTVN.

Belongs to the IspG family. [4Fe-4S] cluster serves as cofactor.

The catalysed reaction is (2E)-4-hydroxy-3-methylbut-2-enyl diphosphate + oxidized [flavodoxin] + H2O + 2 H(+) = 2-C-methyl-D-erythritol 2,4-cyclic diphosphate + reduced [flavodoxin]. It participates in isoprenoid biosynthesis; isopentenyl diphosphate biosynthesis via DXP pathway; isopentenyl diphosphate from 1-deoxy-D-xylulose 5-phosphate: step 5/6. Converts 2C-methyl-D-erythritol 2,4-cyclodiphosphate (ME-2,4cPP) into 1-hydroxy-2-methyl-2-(E)-butenyl 4-diphosphate. In Mycobacterium leprae (strain Br4923), this protein is 4-hydroxy-3-methylbut-2-en-1-yl diphosphate synthase (flavodoxin).